A 938-amino-acid chain; its full sequence is Isoleucine--tRNA ligase (938 aa).

A 'HIGH' region motif is present at residues 58–68 (PYANGSIHIGH). K183 is subject to N6-acetyllysine. Residue E561 coordinates L-isoleucyl-5'-AMP. The 'KMSKS' region signature appears at 602-606 (KMSKS). K605 contributes to the ATP binding site. 4 residues coordinate Zn(2+): C901, C904, C921, and C924.

This sequence belongs to the class-I aminoacyl-tRNA synthetase family. IleS type 1 subfamily. As to quaternary structure, monomer. Zn(2+) serves as cofactor.

The protein resides in the cytoplasm. The catalysed reaction is tRNA(Ile) + L-isoleucine + ATP = L-isoleucyl-tRNA(Ile) + AMP + diphosphate. In terms of biological role, catalyzes the attachment of isoleucine to tRNA(Ile). As IleRS can inadvertently accommodate and process structurally similar amino acids such as valine, to avoid such errors it has two additional distinct tRNA(Ile)-dependent editing activities. One activity is designated as 'pretransfer' editing and involves the hydrolysis of activated Val-AMP. The other activity is designated 'posttransfer' editing and involves deacylation of mischarged Val-tRNA(Ile). The chain is Isoleucine--tRNA ligase from Escherichia coli O127:H6 (strain E2348/69 / EPEC).